A 207-amino-acid polypeptide reads, in one-letter code: LexA repressor (207 aa).

A DNA-binding region (H-T-H motif) is located at residues 28–48 (VREIGEAVGLASSSTVHGHLS). Catalysis depends on for autocatalytic cleavage activity residues Ser130 and Lys168.

The protein belongs to the peptidase S24 family. Homodimer.

The catalysed reaction is Hydrolysis of Ala-|-Gly bond in repressor LexA.. Represses a number of genes involved in the response to DNA damage (SOS response), including recA and lexA. In the presence of single-stranded DNA, RecA interacts with LexA causing an autocatalytic cleavage which disrupts the DNA-binding part of LexA, leading to derepression of the SOS regulon and eventually DNA repair. The protein is LexA repressor of Staphylococcus aureus (strain MSSA476).